Reading from the N-terminus, the 316-residue chain is Olfactory receptor 2T11 (316 aa).

The Extracellular segment spans residues 1–22 (MTNTSSSDFTLLGLLVNSEAAG). Asparagine 3 carries an N-linked (GlcNAc...) asparagine glycan. Residues 23–46 (IVFTVILAVFLGAVTANLVMIFLI) traverse the membrane as a helical segment. Residues 47–54 (QVDSRLHT) are Cytoplasmic-facing. Residues 55 to 76 (PMYFLLSQLSIMDTLFICTTVP) form a helical membrane-spanning segment. Residues 77 to 97 (KLLADMVSKEKIISFVACGIQ) lie on the Extracellular side of the membrane. Cysteine 94 and cysteine 186 form a disulfide bridge. A helical transmembrane segment spans residues 98-117 (IFLYLTMIGSEFFLLGLMAY). Residues 118-136 (DCYVAVCNPLRYPVLMNRK) lie on the Cytoplasmic side of the membrane. The chain crosses the membrane as a helical span at residues 137–155 (KCLLLAAGAWFGGSLDGFL). The Extracellular portion of the chain corresponds to 156–192 (LTPITMNVPYCGSRSINHFFCEIPAVLKLACADTSLY). A helical membrane pass occupies residues 193–216 (ETLMYICCVLMLLIPISIISTSYS). The Cytoplasmic segment spans residues 217 to 233 (LILLTIHRMPSAEGRKK). A helical transmembrane segment spans residues 234–256 (AFTTCSSHLTVVSIFYGAAFYTY). Residues 257 to 269 (VLPQSFHTPEQDK) are Extracellular-facing. Residues 270-289 (VVSAFYTIVTPMLNPLIYSL) traverse the membrane as a helical segment. At 290 to 316 (RNKDVIGAFKKVFACCSSAQKVATSDA) the chain is on the cytoplasmic side.

It belongs to the G-protein coupled receptor 1 family.

The protein resides in the cell membrane. Odorant receptor. This is Olfactory receptor 2T11 (OR2T11) from Homo sapiens (Human).